We begin with the raw amino-acid sequence, 357 residues long: Carbamoyl phosphate synthase small chain (357 aa).

Residues 1–168 are CPSase; the sequence is MSKRLLILED…STATAYPSPN (168 aa). L-glutamine contacts are provided by serine 46, glycine 220, and glycine 222. The 186-residue stretch at 172–357 folds into the Glutamine amidotransferase type-1 domain; sequence KVVVVDFGLK…FMDLMDNFKK (186 aa). Catalysis depends on cysteine 247, which acts as the Nucleophile. The L-glutamine site is built by leucine 248, glutamine 251, asparagine 289, glycine 291, and tyrosine 292. Catalysis depends on residues histidine 331 and aspartate 333.

Belongs to the CarA family. Composed of two chains; the small (or glutamine) chain promotes the hydrolysis of glutamine to ammonia, which is used by the large (or ammonia) chain to synthesize carbamoyl phosphate. Tetramer of heterodimers (alpha,beta)4.

The catalysed reaction is hydrogencarbonate + L-glutamine + 2 ATP + H2O = carbamoyl phosphate + L-glutamate + 2 ADP + phosphate + 2 H(+). It carries out the reaction L-glutamine + H2O = L-glutamate + NH4(+). The protein operates within amino-acid biosynthesis; L-arginine biosynthesis; carbamoyl phosphate from bicarbonate: step 1/1. It functions in the pathway pyrimidine metabolism; UMP biosynthesis via de novo pathway; (S)-dihydroorotate from bicarbonate: step 1/3. In terms of biological role, small subunit of the glutamine-dependent carbamoyl phosphate synthetase (CPSase). CPSase catalyzes the formation of carbamoyl phosphate from the ammonia moiety of glutamine, carbonate, and phosphate donated by ATP, constituting the first step of 2 biosynthetic pathways, one leading to arginine and/or urea and the other to pyrimidine nucleotides. The small subunit (glutamine amidotransferase) binds and cleaves glutamine to supply the large subunit with the substrate ammonia. The chain is Carbamoyl phosphate synthase small chain from Lactococcus lactis subsp. cremoris (strain MG1363).